Here is a 105-residue protein sequence, read N- to C-terminus: Flagellar transcriptional regulator FlhD (105 aa).

Belongs to the FlhD family. As to quaternary structure, homodimer; disulfide-linked. Forms a heterohexamer composed of two FlhC and four FlhD subunits. Each FlhC binds a FlhD dimer, forming a heterotrimer, and a hexamer assembles by dimerization of two heterotrimers.

Its subcellular location is the cytoplasm. Functionally, functions in complex with FlhC as a master transcriptional regulator that regulates transcription of several flagellar and non-flagellar operons by binding to their promoter region. Activates expression of class 2 flagellar genes, including fliA, which is a flagellum-specific sigma factor that turns on the class 3 genes. Also regulates genes whose products function in a variety of physiological pathways. The chain is Flagellar transcriptional regulator FlhD from Cupriavidus pinatubonensis (strain JMP 134 / LMG 1197) (Cupriavidus necator (strain JMP 134)).